Here is a 23-residue protein sequence, read N- to C-terminus: Protein YqfH (23 aa).

This Escherichia coli (strain K12) protein is Protein YqfH.